The chain runs to 411 residues: Acetylornithine aminotransferase (411 aa).

Residues 107-108 and phenylalanine 141 each bind pyridoxal 5'-phosphate; that span reads GT. Residue arginine 144 coordinates N(2)-acetyl-L-ornithine. 227-230 is a pyridoxal 5'-phosphate binding site; sequence DEIQ. Residue lysine 256 is modified to N6-(pyridoxal phosphate)lysine. Threonine 284 contacts N(2)-acetyl-L-ornithine. A pyridoxal 5'-phosphate-binding site is contributed by threonine 285.

This sequence belongs to the class-III pyridoxal-phosphate-dependent aminotransferase family. ArgD subfamily. Homodimer. Requires pyridoxal 5'-phosphate as cofactor.

It is found in the cytoplasm. It catalyses the reaction N(2)-acetyl-L-ornithine + 2-oxoglutarate = N-acetyl-L-glutamate 5-semialdehyde + L-glutamate. It participates in amino-acid biosynthesis; L-arginine biosynthesis; N(2)-acetyl-L-ornithine from L-glutamate: step 4/4. This chain is Acetylornithine aminotransferase, found in Xylella fastidiosa (strain Temecula1 / ATCC 700964).